The primary structure comprises 416 residues: MAETLEEWISDSNQVLNLQMVRTPEDASLLQYEEQQNIDVFNPAFTYPIFGDNEKIFGYKGLDIKLHFASGSLRQYLDISYDAKLASSTTPPDEIEGALYKFIPPDYTKSEVEFQKRVAGDAETFKPLGEKIGSYAHPSAGRKGKGQGDSGMAAGKAIEDNEDVVEYEMYKATWSTPGFREYHRRMQIFVLLFIEGGSYVHEDEDAWEFIVLYERRTRPDSGIFTYHFVGYVSVYPFWCYPDRVRLRLSQFVILPPYQHQGHGSKLYNMLFRHMLDRSEVAELTIEDPAEAFEDLRDRNDLRFLVKEGIVKDPMLYVDVGKGKRGSRVEWELAIRRKYKIAQRQFDRLLEMLLFRQLDKGNPDKVKAYRLHVKARLYRFNYEMLSQMTVEERKEALAKTYESVVEDYKRILGMTFG.

2 interaction with histone H4 N-terminus regions span residues 52–54 (DNE) and 235–237 (YPF). Acetyl-CoA is bound by residues 251 to 253 (FVI) and 258 to 264 (QHQGHGS). Glu-286 serves as the catalytic Proton donor/acceptor.

This sequence belongs to the HAT1 family. Component of the HAT-B complex composed of at least HAT1 and HAT2. The HAT-B complex binds to histone H4 tail.

Its subcellular location is the cytoplasm. The protein resides in the nucleus. It carries out the reaction L-lysyl-[protein] + acetyl-CoA = N(6)-acetyl-L-lysyl-[protein] + CoA + H(+). In terms of biological role, catalytic component of the histone acetylase B (HAT-B) complex. Acetylates 'Lys-12' of histone H4 which is required for telomeric silencing. Has intrinsic substrate specificity that modifies lysine in recognition sequence GXGKXG. Involved in DNA double-strand break repair. In Cryptococcus neoformans var. neoformans serotype D (strain B-3501A) (Filobasidiella neoformans), this protein is Histone acetyltransferase type B catalytic subunit (HAT1).